Here is a 42-residue protein sequence, read N- to C-terminus: Putative protein RNF216-like (42 aa).

This is Putative protein RNF216-like (RNF216P1) from Homo sapiens (Human).